Here is a 137-residue protein sequence, read N- to C-terminus: Protein apnoia (137 aa).

3 helical membrane passes run 7-27, 55-75, and 76-96; these read IVFA…QQQA, LVPG…LTVV, and SIKG…QMLS.

Interacts with crb.

The protein resides in the apical cell membrane. Transmembrane protein that plays a key role in trachea development by regulating crb localization and maintenance at the apical cell membrane. Required for anisotropic apical surface expansion important for tracheal tube elongation and lumen stability at larval stages. The polypeptide is Protein apnoia (Drosophila melanogaster (Fruit fly)).